A 188-amino-acid chain; its full sequence is Protein GrpE (188 aa).

It belongs to the GrpE family. Homodimer.

It localises to the cytoplasm. Participates actively in the response to hyperosmotic and heat shock by preventing the aggregation of stress-denatured proteins, in association with DnaK and GrpE. It is the nucleotide exchange factor for DnaK and may function as a thermosensor. Unfolded proteins bind initially to DnaJ; upon interaction with the DnaJ-bound protein, DnaK hydrolyzes its bound ATP, resulting in the formation of a stable complex. GrpE releases ADP from DnaK; ATP binding to DnaK triggers the release of the substrate protein, thus completing the reaction cycle. Several rounds of ATP-dependent interactions between DnaJ, DnaK and GrpE are required for fully efficient folding. This Chromobacterium violaceum (strain ATCC 12472 / DSM 30191 / JCM 1249 / CCUG 213 / NBRC 12614 / NCIMB 9131 / NCTC 9757 / MK) protein is Protein GrpE.